Consider the following 457-residue polypeptide: NADH-ubiquinone oxidoreductase chain 4 (457 aa).

12 consecutive transmembrane segments (helical) span residues 22–42 (NLWPVTILQSAFLSIAAIALI), 59–79 (SMQLPLLVLSCWLTPLALIAS), 95–115 (IVLVIIITTSLIITFSSLELI), 116–136 (LFYIAFETTLVPTLILITRWG), 148–168 (FIFYTLFGSLPLLISLIALYF), 191–211 (LTVWWLLSILAFLVKMPIYGF), 223–243 (PVAGSMILAAILLKLGGYGLM), 257–277 (SSLPLVVFCCWGALVTSIICI), 282–302 (LKALIAYSSVGHMSIVAAGVF), 309–329 (INGALMLMIAHGLVSSALFAL), 350–370 (LILPLSTFWWLIMCAANLGFP), and 433–453 (LFLLHLLPLLLIIPTPNLVLI).

Belongs to the complex I subunit 4 family.

The protein resides in the mitochondrion membrane. It catalyses the reaction a ubiquinone + NADH + 5 H(+)(in) = a ubiquinol + NAD(+) + 4 H(+)(out). Core subunit of the mitochondrial membrane respiratory chain NADH dehydrogenase (Complex I) that is believed to belong to the minimal assembly required for catalysis. Complex I functions in the transfer of electrons from NADH to the respiratory chain. The immediate electron acceptor for the enzyme is believed to be ubiquinone. This is NADH-ubiquinone oxidoreductase chain 4 (ND4) from Arbacia lixula (Black urchin).